A 136-amino-acid chain; its full sequence is Small ribosomal subunit protein uS19 (136 aa).

This sequence belongs to the universal ribosomal protein uS19 family.

Functionally, protein S19 forms a complex with S13 that binds strongly to the 16S ribosomal RNA. This chain is Small ribosomal subunit protein uS19 (rps19), found in Methanothermobacter thermautotrophicus (strain ATCC 29096 / DSM 1053 / JCM 10044 / NBRC 100330 / Delta H) (Methanobacterium thermoautotrophicum).